Reading from the N-terminus, the 1136-residue chain is Coiled-coil domain-containing protein 136 (1136 aa).

The disordered stretch occupies residues 1–46 (MQAMDGEVLLPALYEEEEEEEEEEEEVEEEQVEKGGSLGSLSMGKH). Positions 14 to 31 (YEEEEEEEEEEEEVEEEQ) are enriched in acidic residues. Ser-50 is subject to Phosphoserine. Coiled coils occupy residues 293–631 (VMQL…QNQE) and 681–730 (LQAL…QTQS). Disordered regions lie at residues 741–773 (GKNS…KSYV), 814–837 (GSVS…DPAE), 965–990 (NRPS…NGVR), and 1040–1111 (KKER…PDPP). The span at 743-752 (NSGSRAPSTE) shows a compositional bias: polar residues. Residues 839–972 (EDLEHFEETV…KENRPSISSE (134 aa)) adopt a coiled-coil conformation. Residues 976–989 (KNVNKNMNKNANGV) show a composition bias toward low complexity. Residues 1017-1057 (YYKASQRRLDELMKEEKEIEEARKKEREKKAKKDLCKLATN) adopt a coiled-coil conformation. Over residues 1040–1052 (KKEREKKAKKDLC) the composition is skewed to basic and acidic residues. Over residues 1067–1091 (EPTEDEEENFEEYREGEDESCEAAE) the composition is skewed to acidic residues. A helical membrane pass occupies residues 1112-1132 (IFSLPLVGLVVISALLWCWWA).

In terms of tissue distribution, present at high level in testis (at protein level).

The protein localises to the cytoplasmic vesicle. It is found in the secretory vesicle. The protein resides in the acrosome membrane. May play a role in acrosome formation in spermatogenesis and in fertilization. The polypeptide is Coiled-coil domain-containing protein 136 (Ccdc136) (Mus musculus (Mouse)).